A 1827-amino-acid chain; its full sequence is Sucrase-isomaltase, intestinal (1827 aa).

Over 2-12 the chain is Cytoplasmic; that stretch reads ARKKFSGLEIS. Position 7 is a phosphoserine; by PKA (Ser7). A helical; Signal-anchor for type II membrane protein membrane pass occupies residues 13–32; sequence LIVLFVIVTIIAIALIVVLA. At 33 to 1827 the chain is on the lumenal side; the sequence is TKTPAVDEIS…LEEPIEINWS (1795 aa). A disordered region spans residues 40–61; it reads EISDSTSTPATTRVTTNPSDSG. Positions 45–55 are enriched in low complexity; the sequence is TSTPATTRVTT. Residues 61–110 enclose the P-type 1 domain; it reads GKCPNVLNDPVNVRINCIPEQFPTEGICAQRGCCWRPWNDSLIPWCFFVD. Disulfide bonds link Cys63–Cys94, Cys77–Cys93, and Cys88–Cys106. Asn99 carries an N-linked (GlcNAc...) asparagine glycan. The isomaltase stretch occupies residues 110–1007; it reads DNHGYNVQDM…DLQLNTANAR (898 aa). Sulfotyrosine occurs at positions 237 and 239. Residues Asp264 and Asp388 each coordinate substrate. A sulfotyrosine mark is found at Tyr391 and Tyr400. Residues Asn437 and Asn455 are each glycosylated (N-linked (GlcNAc...) asparagine). The Nucleophile; for isomaltase activity role is filled by Asp505. Cys520 and Cys545 are oxidised to a cystine. Residue Arg588 participates in substrate binding. Asp604 serves as the catalytic For isomaltase activity. Cysteines 635 and 646 form a disulfide. His662 is a substrate binding site. Residues Tyr667, Tyr763, and Tyr765 each carry the sulfotyrosine modification. 4 N-linked (GlcNAc...) asparagine glycosylation sites follow: Asn823, Asn855, Asn904, and Asn926. One can recognise a P-type 2 domain in the interval 932–978; it reads NQIFSENERFNCYPDADLATEQKCTQRGCVWRTGSSLSKAPECYFPR. The segment at 1008-1827 is sucrase; the sequence is IKLPSDPIST…LEEPIEINWS (820 aa). Asn1235, Asn1303, Asn1340, and Asn1354 each carry an N-linked (GlcNAc...) asparagine glycan. Residue Asp1394 is the Nucleophile; for sucrase activity of the active site. Glu1397 (for sucrase activity) is an active-site residue. An N-linked (GlcNAc...) asparagine glycan is attached at Asn1403. Asp1500 functions as the Proton donor; for isomaltase activity in the catalytic mechanism. N-linked (GlcNAc...) asparagine glycans are attached at residues Asn1535, Asn1572, Asn1675, Asn1748, Asn1763, and Asn1815.

The protein belongs to the glycosyl hydrolase 31 family. As to quaternary structure, the resulting sucrase and isomaltase subunits stay associated with one another in a complex by non-covalent linkages. The precursor is proteolytically cleaved when exposed to pancreatic proteases in the intestinal lumen. In terms of processing, sulfated. As to expression, expressed in the poorly differentiated crypt cells of the small intestine as well as in the mature villous cells. Expressed at very low levels in the colon.

Its subcellular location is the apical cell membrane. It catalyses the reaction Hydrolysis of sucrose and maltose by an alpha-D-glucosidase-type action.. The enzyme catalyses Hydrolysis of (1-&gt;6)-alpha-D-glucosidic linkages in some oligosaccharides produced from starch and glycogen by alpha-amylase, and in isomaltose.. Functionally, plays an important role in the final stage of carbohydrate digestion. Isomaltase activity is specific for both alpha-1,4- and alpha-1,6-oligosaccharides. The sequence is that of Sucrase-isomaltase, intestinal (SI) from Homo sapiens (Human).